Reading from the N-terminus, the 234-residue chain is Phosphoribosylaminoimidazole-succinocarboxamide synthase (234 aa).

It belongs to the SAICAR synthetase family.

It catalyses the reaction 5-amino-1-(5-phospho-D-ribosyl)imidazole-4-carboxylate + L-aspartate + ATP = (2S)-2-[5-amino-1-(5-phospho-beta-D-ribosyl)imidazole-4-carboxamido]succinate + ADP + phosphate + 2 H(+). Its pathway is purine metabolism; IMP biosynthesis via de novo pathway; 5-amino-1-(5-phospho-D-ribosyl)imidazole-4-carboxamide from 5-amino-1-(5-phospho-D-ribosyl)imidazole-4-carboxylate: step 1/2. In Exiguobacterium sp. (strain ATCC BAA-1283 / AT1b), this protein is Phosphoribosylaminoimidazole-succinocarboxamide synthase.